Here is a 722-residue protein sequence, read N- to C-terminus: Bifunctional UDP-N-acetylglucosamine 2-epimerase/N-acetylmannosamine kinase (722 aa).

Residues Arg19, Ser23, Arg113, His220, and Asn253 each coordinate UDP. Residues Lys259, Glu271, Lys280, and His281 each contribute to the CMP-N-acetyl-beta-neuraminate site. UDP-binding residues include Val282, Ser301, Ser302, Glu307, and Arg321. Residues 406–722 (TLSALAVDLG…VLDYTTRRIH (317 aa)) are N-acetylmannosamine kinase. Asp413 contacts Mg(2+). Residue Gly416 participates in an N-acyl-D-mannosamine 6-phosphate binding. Residues Thr417, Asn418, and Arg420 each coordinate ADP. 6 residues coordinate an N-acyl-D-mannosamine 6-phosphate: Gly476, Arg477, Thr489, Asn516, Asp517, and Gly545. The an N-acyl-D-mannosamine site is built by Gly476, Arg477, Thr489, Asn516, and Asp517. The active site involves Asp517. Glu566 and His569 together coordinate an N-acyl-D-mannosamine. Residue His569 coordinates an N-acyl-D-mannosamine 6-phosphate. Residues His569, Cys579, Cys581, and Cys586 each coordinate Zn(2+). Glu588 is an an N-acyl-D-mannosamine 6-phosphate binding site. An N-acyl-D-mannosamine is bound at residue Glu588.

It in the N-terminal section; belongs to the UDP-N-acetylglucosamine 2-epimerase family. In the C-terminal section; belongs to the ROK (NagC/XylR) family. In terms of assembly, homodimer. Homotetramer. Homohexamer. The hexameric form exhibits both enzyme activities, whereas the dimeric form only catalyzes the phosphorylation of N-acyl-D-mannosamine. In terms of processing, phosphorylated. Phosphorylation by PKC activates the UDP-N-acetylglucosamine 2-epimerase activity. As to expression, widely expressed. Highest expression in liver. Also found at high levels in lung, brain and kidney.

The protein localises to the cytoplasm. It is found in the cytosol. The enzyme catalyses UDP-N-acetyl-alpha-D-glucosamine + H2O = aldehydo-N-acetyl-D-mannosamine + UDP + H(+). It catalyses the reaction an N-acyl-D-mannosamine + ATP = an N-acyl-D-mannosamine 6-phosphate + ADP + H(+). It functions in the pathway amino-sugar metabolism; N-acetylneuraminate biosynthesis. With respect to regulation, the UDP-N-acetylglucosamine 2-epimerase activity, in contrast to the N-acetylmannosamine kinase activity, exhibits allosteric regulation by cytidine monophosphate-N-acetylneuraminic acid (CMP-Neu5Ac), the end product of neuraminic acid biosynthesis. Moreover, the activity is contingent upon the oligomeric state of the enzyme. The monomeric form is inactive, while the dimeric form selectively catalyzes the phosphorylation of N-acetylmannosamine. The hexameric form, on the other hand, demonstrates full proficiency in both enzyme activities. Furthermore, the UDP-N-acetylglucosamine 2-epimerase activity is increased by PKC-mediated phosphorylation. Functionally, bifunctional enzyme that possesses both UDP-N-acetylglucosamine 2-epimerase and N-acetylmannosamine kinase activities, and serves as the initiator of the biosynthetic pathway leading to the production of N-acetylneuraminic acid (NeuAc), a critical precursor in the synthesis of sialic acids. By catalyzing this pivotal and rate-limiting step in sialic acid biosynthesis, this enzyme assumes a pivotal role in governing the regulation of cell surface sialylation, playing a role in embryonic angiogenesis. Sialic acids represent a category of negatively charged sugars that reside on the surface of cells as terminal components of glycoconjugates and mediate important functions in various cellular processes, including cell adhesion, signal transduction, and cellular recognition. This is Bifunctional UDP-N-acetylglucosamine 2-epimerase/N-acetylmannosamine kinase from Mus musculus (Mouse).